Reading from the N-terminus, the 476-residue chain is MTMGLRAPHWVAVGLLTWAALGLLVAGHEGHGDLHKDVEEDFHGHSHGHSHEDFHHGHSHGHSHEDFHHGHGHTHESIWHGHAHSHDHGHSREELHHGHSHGHSHDSLHHGGHGHAHREHSHGTSREAGAPGIKHHLDTVTLWAYALGATVLISAAPFFVLFLIPVESNSPRHRSLLQILLSFASGGLLGDAFLHLIPHALEPHSHHAPEQPGHGHSHSGQGPILSVGLWVLSGIVAFLVVEKFVRHVKGGHGHSHGHGDRHAHGDSHTHGDRHECSSKEKPSTEEEKEVGGLRKRRGGNTGPRDGPVKPQSPEEEKAGSDLRVSGYLNLAADLAHNFTDGLAIGASFRGGRGLGILTTMTVLLHEVPHEVGDFAILVQSGCSKKQAMRLQLVTAIGALAGTACALLTEGGAVDSDVAGGAGPGWVLPFTAGGFIYVATVSVLPELLREASPLQSLLEVLGLLGGVAMMVLIAHLE.

The helical transmembrane segment at 7–27 (APHWVAVGLLTWAALGLLVAG) threads the bilayer. The span at 35–109 (HKDVEEDFHG…SHGHSHDSLH (75 aa)) shows a compositional bias: basic and acidic residues. Residues 35-131 (HKDVEEDFHG…HGTSREAGAP (97 aa)) form a disordered region. Histidine 73 is modified (pros-methylhistidine). A compositionally biased stretch (basic residues) spans 110-120 (HGGHGHAHREH). A run of 3 helical transmembrane segments spans residues 146 to 166 (ALGA…LIPV), 177 to 197 (LQIL…LHLI), and 222 to 242 (GPIL…LVVE). The tract at residues 249-320 (KGGHGHSHGH…QSPEEEKAGS (72 aa)) is disordered. The segment covering 257–292 (GHGDRHAHGDSHTHGDRHECSSKEKPSTEEEKEVGG) has biased composition (basic and acidic residues). Serine 283 carries the phosphoserine modification. 2 helical membrane-spanning segments follow: residues 393-413 (VTAI…GGAV) and 417-437 (VAGG…FIYV).

This sequence belongs to the ZIP transporter (TC 2.A.5) family. KE4/Catsup subfamily. In terms of assembly, homodimer. Post-translationally, methylation at some His residue by METTL9 leads to reduced zinc-binding. Rapidly phosphorylated by CK2 following Zn(2+) treatment. This phosphorylation is required for efficient cytosolic Zn(2+) release. In terms of tissue distribution, widely expressed. Highly expressed in the intestinal crypts.

The protein resides in the endoplasmic reticulum membrane. The protein localises to the golgi apparatus. It localises to the cis-Golgi network membrane. It carries out the reaction Zn(2+)(in) = Zn(2+)(out). In terms of biological role, transports Zn(2+) from the endoplasmic reticulum (ER)/Golgi apparatus to the cytosol, playing an essential role in the regulation of cytosolic zinc levels. Acts as a gatekeeper of zinc release from intracellular stores, requiring post-translational activation by phosphorylation, resulting in activation of multiple downstream pathways leading to cell growth and proliferation. Has an essential role in B cell development and is required for proper B cell receptor signaling. Plays an important role in maintaining intestinal epithelial homeostasis and skin dermis development by regulating ER function. Controls cell signaling pathways involved in glucose metabolism in skeletal muscle. Has a protective role against ER stress in different biological contexts. Mediates Zn(2+)-induced ferroptosis. This is Zinc transporter SLC39A7 (Slc39a7) from Mus musculus (Mouse).